A 203-amino-acid chain; its full sequence is N-(5'-phosphoribosyl)anthranilate isomerase (203 aa).

It belongs to the TrpF family.

The catalysed reaction is N-(5-phospho-beta-D-ribosyl)anthranilate = 1-(2-carboxyphenylamino)-1-deoxy-D-ribulose 5-phosphate. It participates in amino-acid biosynthesis; L-tryptophan biosynthesis; L-tryptophan from chorismate: step 3/5. This is N-(5'-phosphoribosyl)anthranilate isomerase from Listeria innocua serovar 6a (strain ATCC BAA-680 / CLIP 11262).